A 420-amino-acid chain; its full sequence is MLALSPATRDGCDGASEFLDTSCGFTIINPEEEEEFPDFADHGDLLDIIDFDDIFGVAGDVLPDLEIDPEILSGDFSNHMNASSTITTTSDKTDSQGETTKGSSGKGEEVVSKRDDVAAETVTYDGDSDRKRKYSSSASSKNNRISNNEGKRKVKVDWTPELHRRFVEAVEQLGVDKAVPSRILELMGVHCLTRHNVASHLQKYRSHRKHLLAREAEAANWTRKRHIYGVDTGANLNGRTKNGWLAPAPTLGFPPPPPVAVAPPPVHHHHFRPLHVWGHPTVDQSIMPHVWPKHLPPPSTAMPNPPFWVSDSPYWHPMHNGTTPYLPTVATRFRAPPVAGIPHALPPHHTMYKPNLGFGGARPPVDLHPSKESVDAAIGDVLTRPWLPLPLGLNPPAVDGVMTELHRHGVSEVPPTASCA.

The disordered stretch occupies residues 74–152 (GDFSNHMNAS…NRISNNEGKR (79 aa)). The span at 106 to 117 (KGEEVVSKRDDV) shows a compositional bias: basic and acidic residues. Residues 135-147 (SSSASSKNNRISN) show a composition bias toward low complexity. The myb-like GARP DNA-binding region spans 150–209 (GKRKVKVDWTPELHRRFVEAVEQLGVDKAVPSRILELMGVHCLTRHNVASHLQKYRSHRK).

Interacts with NAC92. Expressed in rosette and cauline leaves. Expressed at low levels in cotyledons and shoots.

It is found in the nucleus. Transcriptional activator that functions with GLK2 to promote chloroplast development. Acts as an activator of nuclear photosynthetic genes involved in chlorophyll biosynthesis, light harvesting, and electron transport. Acts in a cell-autonomous manner to coordinate and maintain the photosynthetic apparatus within individual cells. May function in photosynthetic capacity optimization by integrating responses to variable environmental and endogenous cues. Prevents premature senescence. This chain is Transcription activator GLK1 (GLK1), found in Arabidopsis thaliana (Mouse-ear cress).